The chain runs to 150 residues: Arginine repressor (150 aa).

It belongs to the ArgR family.

The protein localises to the cytoplasm. It participates in amino-acid biosynthesis; L-arginine biosynthesis [regulation]. Its function is as follows. Regulates arginine biosynthesis genes. The chain is Arginine repressor from Staphylococcus aureus (strain Mu3 / ATCC 700698).